The chain runs to 634 residues: Kelch-like protein 22 (634 aa).

Position 2 is an N-acetylalanine (alanine 2). Residues 50–117 enclose the BTB domain; it reads FDVVLVVEGK…IYTSELELSL (68 aa). Kelch repeat units lie at residues 299–349, 350–399, 400–446, 448–493, 495–544, and 545–593; these read CVVG…VLNN, FVYL…VVGK, YIYA…TLQG, MYIT…ALLD, LFVI…VLDS, and RIYV…VLTL. Threonine 463 bears the Phosphothreonine mark. Phosphotyrosine is present on tyrosine 466. At threonine 475 the chain carries Phosphothreonine. Positions 600 to 634 are disordered; sequence EQPRGTPNRSQADADFASEVMSVSDWEEFDNSSED. Phosphothreonine is present on threonine 605. A compositionally biased stretch (acidic residues) spans 624–634; the sequence is DWEEFDNSSED.

Component of the BCR(KLHL22) E3 ubiquitin ligase complex, at least composed of CUL3, KLHL22 and RBX1. Interacts with PLK1. Interacts with DEPDC5 (via DEP domain); the interaction depends on amino acid availability. Interacts with YWHAE; required for the nuclear localization of KLHL22 upon amino acid starvation.

The protein localises to the cytoplasm. Its subcellular location is the cytosol. The protein resides in the cytoskeleton. It is found in the microtubule organizing center. It localises to the centrosome. The protein localises to the spindle. Its subcellular location is the nucleus. The protein resides in the lysosome. Its pathway is protein modification; protein ubiquitination. Its function is as follows. Substrate-specific adapter of a BCR (BTB-CUL3-RBX1) E3 ubiquitin ligase complex required for chromosome alignment and localization of PLK1 at kinetochores. The BCR(KLHL22) ubiquitin ligase complex mediates monoubiquitination of PLK1, leading to PLK1 dissociation from phosphoreceptor proteins and subsequent removal from kinetochores, allowing silencing of the spindle assembly checkpoint (SAC) and chromosome segregation. Monoubiquitination of PLK1 does not lead to PLK1 degradation. The BCR(KLHL22) ubiquitin ligase complex is also responsible for the amino acid-stimulated 'Lys-48' polyubiquitination and proteasomal degradation of DEPDC5. Through the degradation of DEPDC5, releases the GATOR1 complex-mediated inhibition of the TORC1 pathway. It is therefore an amino acid-dependent activator within the amino acid-sensing branch of the TORC1 pathway, indirectly regulating different cellular processes including cell growth and autophagy. The polypeptide is Kelch-like protein 22 (Mus musculus (Mouse)).